Here is a 369-residue protein sequence, read N- to C-terminus: Peptide chain release factor 2 (369 aa).

Residue Q251 is modified to N5-methylglutamine.

It belongs to the prokaryotic/mitochondrial release factor family. Post-translationally, methylated by PrmC. Methylation increases the termination efficiency of RF2.

The protein localises to the cytoplasm. Peptide chain release factor 2 directs the termination of translation in response to the peptide chain termination codons UGA and UAA. The sequence is that of Peptide chain release factor 2 from Acidothermus cellulolyticus (strain ATCC 43068 / DSM 8971 / 11B).